A 237-amino-acid chain; its full sequence is Corrinoid adenosyltransferase MMAB (237 aa).

A mitochondrion-targeting transit peptide spans 1-26 (MAVWLFGGRLGLRGRLSACRLLCPRF). The tract at residues 30–49 (GPQGGEDGDRLQPSSTAAKI) is disordered. ATP is bound by residues 54–57 (TKTG), 62–63 (SS), and lysine 72. A Phosphoserine modification is found at serine 128. Residue 184–188 (RRAER) coordinates ATP. The residue at position 205 (lysine 205) is an N6-succinyllysine. An ATP-binding site is contributed by asparagine 208. The residue at position 224 (lysine 224) is an N6-acetyllysine; alternate. At lysine 224 the chain carries N6-succinyllysine; alternate.

Belongs to the Cob(I)alamin adenosyltransferase family. Homotrimer.

Its subcellular location is the mitochondrion. It catalyses the reaction cob(I)alamin-[corrinoid adenosyltransferase] + ATP = apo-[corrinoid adenosyltransferase] + adenosylcob(III)alamin + triphosphate. Converts cob(I)alamin to adenosylcobalamin (adenosylcob(III)alamin), a coenzyme for methylmalonyl-CoA mutase, therefore participates in the final step of the vitamin B12 conversion. Generates adenosylcobalamin (AdoCbl) and directly delivers the cofactor to MUT in a transfer that is stimulated by ATP-binding to MMAB and gated by MMAA. In Mus musculus (Mouse), this protein is Corrinoid adenosyltransferase MMAB.